We begin with the raw amino-acid sequence, 1026 residues long: Beta-galactosidase (1026 aa).

Substrate is bound by residues N104 and D203. Residue D203 participates in Na(+) binding. Residues E418, H420, and E463 each contribute to the Mg(2+) site. Substrate-binding positions include E463 and 539-542 (EYAH). E463 acts as the Proton donor in catalysis. The Nucleophile role is filled by E539. Residue N599 coordinates Mg(2+). Na(+)-binding residues include F603 and N606. Substrate-binding residues include N606 and W1002.

Belongs to the glycosyl hydrolase 2 family. As to quaternary structure, homotetramer. Mg(2+) is required as a cofactor. The cofactor is Na(+).

The enzyme catalyses Hydrolysis of terminal non-reducing beta-D-galactose residues in beta-D-galactosides.. The polypeptide is Beta-galactosidase (Erwinia tasmaniensis (strain DSM 17950 / CFBP 7177 / CIP 109463 / NCPPB 4357 / Et1/99)).